The primary structure comprises 557 residues: Probable serine/threonine-protein kinase WNK7 (557 aa).

The Protein kinase domain maps to 28-285 (IRYKEVIGKG…AEELLLDSFL (258 aa)). Residues 108–111 (TELF) and K158 contribute to the ATP site. Catalysis depends on D175, which acts as the Proton acceptor. A compositionally biased stretch (polar residues) spans 451-477 (QNQSSKDNHQNGASSQAGESISHSLSS). A disordered region spans residues 451 to 517 (QNQSSKDNHQ…EEEEDERLKE (67 aa)). Position 505 is a phosphoserine (S505).

The protein belongs to the protein kinase superfamily. Ser/Thr protein kinase family. WNK subfamily.

It catalyses the reaction L-seryl-[protein] + ATP = O-phospho-L-seryl-[protein] + ADP + H(+). The catalysed reaction is L-threonyl-[protein] + ATP = O-phospho-L-threonyl-[protein] + ADP + H(+). Its function is as follows. May regulate flowering time by modulating the photoperiod pathway. The chain is Probable serine/threonine-protein kinase WNK7 (WNK7) from Arabidopsis thaliana (Mouse-ear cress).